The primary structure comprises 230 residues: Phosphoribosylaminoimidazole-succinocarboxamide synthase (230 aa).

It belongs to the SAICAR synthetase family.

It catalyses the reaction 5-amino-1-(5-phospho-D-ribosyl)imidazole-4-carboxylate + L-aspartate + ATP = (2S)-2-[5-amino-1-(5-phospho-beta-D-ribosyl)imidazole-4-carboxamido]succinate + ADP + phosphate + 2 H(+). The protein operates within purine metabolism; IMP biosynthesis via de novo pathway; 5-amino-1-(5-phospho-D-ribosyl)imidazole-4-carboxamide from 5-amino-1-(5-phospho-D-ribosyl)imidazole-4-carboxylate: step 1/2. This Thermotoga maritima (strain ATCC 43589 / DSM 3109 / JCM 10099 / NBRC 100826 / MSB8) protein is Phosphoribosylaminoimidazole-succinocarboxamide synthase (purC).